The chain runs to 216 residues: Outer-membrane lipoprotein LolB (216 aa).

Positions 1–24 (MNNLNYFTKISASCAALALMTLAG) are cleaved as a signal peptide. The N-palmitoyl cysteine moiety is linked to residue cysteine 25. A lipid anchor (S-diacylglycerol cysteine) is attached at cysteine 25.

Belongs to the LolB family. In terms of assembly, monomer.

It localises to the cell outer membrane. Plays a critical role in the incorporation of lipoproteins in the outer membrane after they are released by the LolA protein. This is Outer-membrane lipoprotein LolB from Shewanella loihica (strain ATCC BAA-1088 / PV-4).